We begin with the raw amino-acid sequence, 351 residues long: Autoinducer 2 import system permease protein LsrC (351 aa).

Transmembrane regions (helical) follow at residues 14-34 (LLAILTLFALLGIIDRNYFSL), 39-59 (MIFSSAQILILLAIGATLVML), 70-90 (ITGLCAVTVGMALNAGFGLAA), 93-113 (LFALLVGMVAGFFNGILVTWL), 115-135 (IPAIVATLGTLGLYRGLMLLL), 155-175 (ILFSISPIGWLTMLLILAMAW), 213-233 (MNGVMAALAGIVFASQIGFIP), 252-272 (GISLLGGTGTIIGAILGAFLL), and 284-304 (LPAWWNDFIAGLVLLGVLVFD).

Belongs to the binding-protein-dependent transport system permease family. AraH/RbsC subfamily. The complex is composed of two ATP-binding proteins (LsrA), two transmembrane proteins (LsrC and LsrD) and a solute-binding protein (LsrB).

The protein resides in the cell inner membrane. Its function is as follows. Part of the ABC transporter complex LsrABCD involved in autoinducer 2 (AI-2) import. Probably responsible for the translocation of the substrate across the membrane. In Yersinia pestis bv. Antiqua (strain Antiqua), this protein is Autoinducer 2 import system permease protein LsrC (lsrC).